The sequence spans 344 residues: Cyanuric acid amidohydrolase (344 aa).

Positions 1–91 (MTVVDIVKRT…ASAFVGTDRP (91 aa)) are RU A. Residues Arg51 and 71 to 72 (SG) contribute to the substrate site. An RU B region spans residues 97–232 (ALVAAVGRTA…CHILVLGNSP (136 aa)). Lys146 is a catalytic residue. Substrate contacts are provided by residues Arg178 and 215–216 (SS). The active-site Nucleophile is Ser215. The segment at 238-344 (LRAVHGVMRD…PVTVVYRVAS (107 aa)) is RU C. Glu276 lines the Mg(2+) pocket. Residues Arg303 and 322-323 (SG) contribute to the substrate site. Residues Ala325, Gln328, Gly329, Pro330, and Gly333 each contribute to the Mg(2+) site.

It belongs to the cyclic amide hydrolase (CyAH) family. Homotetramer.

It carries out the reaction cyanurate + H2O = 1-carboxybiuret + H(+). The protein operates within xenobiotic degradation; atrazine degradation; biuret from cyanurate: step 1/1. Its activity is regulated as follows. Inhibited by barbituric acid. Its function is as follows. Responsible for the hydrolysis of cyanuric acid, an intermediate formed during catabolism of s-triazine based compounds in herbicides such as atrazine and polymers such as melamine. Catalyzes the hydrolytic opening of the s-triazine ring of cyanuric acid (2,4,6-trihydroxy-s-triazine) to yield carbon dioxide and carboxybiuret, which spontaneously decarboxylates to biuret. This is Cyanuric acid amidohydrolase from Pseudonocardia dioxanivorans (strain ATCC 55486 / DSM 44775 / JCM 13855 / CB1190).